The primary structure comprises 352 residues: Ion-translocating oxidoreductase complex subunit D (352 aa).

5 consecutive transmembrane segments (helical) span residues 20-40 (IMLL…WFFG), 42-62 (GTLV…ALVL), 78-109 (ALLT…VIIA), 123-143 (PAMI…TSWL), and 148-168 (IAVN…GHTA). An FMN phosphoryl threonine modification is found at Thr-187. The next 4 membrane-spanning stretches (helical) occupy residues 214-234 (ILAG…GVWL), 242-262 (WHIP…GWLF), 267-287 (LAAP…FFIL), and 301-318 (LMFG…RSFG).

It belongs to the NqrB/RnfD family. As to quaternary structure, the complex is composed of six subunits: RsxA, RsxB, RsxC, RsxD, RsxE and RsxG. FMN serves as cofactor.

It is found in the cell inner membrane. In terms of biological role, part of a membrane-bound complex that couples electron transfer with translocation of ions across the membrane. Required to maintain the reduced state of SoxR. The protein is Ion-translocating oxidoreductase complex subunit D of Shigella flexneri serotype 5b (strain 8401).